Reading from the N-terminus, the 224-residue chain is NADH-quinone oxidoreductase subunit B (224 aa).

Residues Cys67, Cys68, Cys133, and Cys162 each coordinate [4Fe-4S] cluster. The disordered stretch occupies residues 200–224 (DMPAEKDRKRGERIKVTNLRTPDEI). Residues 201–224 (MPAEKDRKRGERIKVTNLRTPDEI) are compositionally biased toward basic and acidic residues.

Belongs to the complex I 20 kDa subunit family. As to quaternary structure, NDH-1 is composed of 14 different subunits. Subunits NuoB, C, D, E, F, and G constitute the peripheral sector of the complex. [4Fe-4S] cluster serves as cofactor.

It is found in the cell inner membrane. The enzyme catalyses a quinone + NADH + 5 H(+)(in) = a quinol + NAD(+) + 4 H(+)(out). In terms of biological role, NDH-1 shuttles electrons from NADH, via FMN and iron-sulfur (Fe-S) centers, to quinones in the respiratory chain. The immediate electron acceptor for the enzyme in this species is believed to be ubiquinone. Couples the redox reaction to proton translocation (for every two electrons transferred, four hydrogen ions are translocated across the cytoplasmic membrane), and thus conserves the redox energy in a proton gradient. The polypeptide is NADH-quinone oxidoreductase subunit B (Aeromonas salmonicida (strain A449)).